The following is a 435-amino-acid chain: MIILWSLIVHLQLTCLHLILQTPNLEALDALEIINYQTTKYTIPEVWKEQPVATIGEDVDDQDTEDEESYLKFGDDAEVRTSVSEGLHEGAFCRRSFDGRSGYCILAYQCLHVIREYRVHGTRIDICTHRNNVPVICCPLADKHVLAQRISATKCQEYNAAARRLHLTDTGRTFSGKQCVPSVPLIVGGTPTRHGLFPHMAALGWTQGSGSKDQDIKWGCGGALVSELYVLTAAHCATSGSKPPDMVRLGARQLNETSATQQDIKILIIVLHPKYRSSAYYHDIALLKLTRRVKFSEQVRPACLWQLPELQIPTVVAAGWGRTEFLGAKSNALRQVDLDVVPQMTCKQIYRKERRLPRGIIEGQFCAGYLPGGRDTCQGDSGGPIHALLPEYNCVAFVVGITSFGKFCAAPNAPGVYTRLYSYLDWIEKIAFKQH.

A signal peptide spans 1–27 (MIILWSLIVHLQLTCLHLILQTPNLEA). A Clip domain is found at 92–138 (FCRRSFDGRSGYCILAYQCLHVIREYRVHGTRIDICTHRNNVPVICC). Disulfide bonds link cysteine 93/cysteine 137, cysteine 104/cysteine 127, cysteine 110/cysteine 138, cysteine 179/cysteine 303, cysteine 220/cysteine 236, cysteine 346/cysteine 366, and cysteine 377/cysteine 408. The 247-residue stretch at 186 to 432 (IVGGTPTRHG…YLDWIEKIAF (247 aa)) folds into the Peptidase S1 domain. The active-site Charge relay system is histidine 235. N-linked (GlcNAc...) asparagine glycosylation occurs at asparagine 255. Aspartate 283 serves as the catalytic Charge relay system. Serine 381 serves as the catalytic Charge relay system.

It belongs to the peptidase S1 family. CLIP subfamily. As to quaternary structure, interacts (via N-terminal prodomain) with ea/easter (via Peptidase domain); leads to proteolytic activation of ea by snk. This interaction does not require sulfation of a vitelline membrane component by pip but proteolytic cleavage of ea by snk does. Post-translationally, proteolytically activated by gd. May also be cleaved by another protease.

It is found in the secreted. Component of the extracellular signaling pathway that establishes the dorsal-ventral pathway of the embryo. A protease cascade involving ndl, gd, snk and ea results in activation of the spz Toll receptor ligand; acts downstream of ndl and gd. Activation of ea requires both activation of the ndl-gd-snk protease cascade and sulfation of a vitelline membrane component by pip. Localized activation of the Toll receptor in the ventral region of the embryo defines cell identities along the dorsal-ventral continuum. This is Serine protease snk from Drosophila melanogaster (Fruit fly).